The chain runs to 247 residues: ATP synthase subunit a, chloroplastic (247 aa).

The next 5 membrane-spanning stretches (helical) occupy residues 38–58 (QVLI…SIAV), 95–115 (VPFI…GALL), 134–154 (INTT…AGLT), 199–219 (LVVV…VMFL), and 220–240 (GLFT…AYIG).

This sequence belongs to the ATPase A chain family. In terms of assembly, F-type ATPases have 2 components, CF(1) - the catalytic core - and CF(0) - the membrane proton channel. CF(1) has five subunits: alpha(3), beta(3), gamma(1), delta(1), epsilon(1). CF(0) has four main subunits: a, b, b' and c.

The protein resides in the plastid. Its subcellular location is the chloroplast thylakoid membrane. Key component of the proton channel; it plays a direct role in the translocation of protons across the membrane. The protein is ATP synthase subunit a, chloroplastic of Eucalyptus globulus subsp. globulus (Tasmanian blue gum).